The sequence spans 1306 residues: Receptor-type tyrosine-protein phosphatase C (1306 aa).

Positions 1 to 25 (MTMYLWLKLLAFGFAFLDTEVFVTG) are cleaved as a signal peptide. Over 26-577 (QSPTPSPTGL…LHHSTSYNSK (552 aa)) the chain is Extracellular. The segment at 28–163 (PTPSPTGLTT…TASTFPTDPV (136 aa)) is disordered. Polar residues-rich tracts occupy residues 52-61 (THTTAFSPAS) and 70-131 (SETT…SGSA). N-linked (GlcNAc...) asparagine glycans are attached at residues Asn-80, Asn-92, Asn-97, Asn-186, Asn-192, Asn-199, Asn-234, Asn-262, Asn-272, and Asn-278. The N-linked (GlcNAc...) asparagine; atypical glycan is linked to Asn-286. N-linked (GlcNAc...) asparagine glycans are attached at residues Asn-337, Asn-380, Asn-421, Asn-470, Asn-490, and Asn-531. Fibronectin type-III domains follow at residues 391 to 483 (SPGE…TKSA) and 484 to 576 (PPSQ…SYNS). A helical membrane pass occupies residues 578 to 598 (ALIAFLAFLIIVTSIALLVVL). Residues 599–1306 (YKIYDLHKKR…PASPALNQGS (708 aa)) lie on the Cytoplasmic side of the membrane. 2 consecutive Tyrosine-protein phosphatase domains span residues 653–912 (FLAE…LVEY) and 944–1228 (LEAE…IAST). Tyr-683 is modified (phosphotyrosine). Residues Asp-821, 853–859 (CSAGVGR), and Gln-897 each bind substrate. Cys-853 (phosphocysteine intermediate) is an active-site residue. Phosphoserine is present on residues Ser-975, Ser-994, Ser-997, Ser-1001, Ser-1004, Ser-1005, and Ser-1009. The tract at residues 993–1014 (MSKESEHDSDESSDDDSDSEEP) is disordered. Residues 999 to 1012 (HDSDESSDDDSDSE) show a composition bias toward acidic residues. Cys-1169 (phosphocysteine intermediate) is an active-site residue. A disordered region spans residues 1261-1306 (CVNPLGAPEKLPEAKEQAEGSEPTSGTEGPEHSVNGPASPALNQGS). Ser-1299 bears the Phosphoserine mark.

This sequence belongs to the protein-tyrosine phosphatase family. Receptor class 1/6 subfamily. Binds GANAB and PRKCSH. Interacts with SKAP1. Interacts with DPP4; the interaction is enhanced in an interleukin-12-dependent manner in activated lymphocytes. Interacts with CD53; this interaction stabilizes PTPRC on the membrane and is required for optimal phosphatase activity. In terms of assembly, interacts with CLEC10A. As to quaternary structure, does not interact with CLEC10A. (Microbial infection) Interacts with human cytomegalovirus protein UL11; the interaction is required for binding of UL11 to T-cells. In terms of processing, heavily N- and O-glycosylated. Isoform 1: Detected in thymocytes. Isoform 2: Detected in thymocytes. Isoform 3: Detected in thymocytes. Isoform 4: Not detected in thymocytes. Isoform 5: Detected in thymocytes. Isoform 6: Not detected in thymocytes. Isoform 7: Detected in thymocytes. Isoform 8: Not detected in thymocytes.

The protein resides in the cell membrane. The protein localises to the membrane raft. It localises to the synapse. It catalyses the reaction O-phospho-L-tyrosyl-[protein] + H2O = L-tyrosyl-[protein] + phosphate. In terms of biological role, protein tyrosine-protein phosphatase required for T-cell activation through the antigen receptor. Acts as a positive regulator of T-cell coactivation upon binding to DPP4. The first PTPase domain has enzymatic activity, while the second one seems to affect the substrate specificity of the first one. Upon T-cell activation, recruits and dephosphorylates SKAP1 and FYN. Dephosphorylates LYN, and thereby modulates LYN activity. Interacts with CLEC10A at antigen presenting cell-T cell contact; CLEC10A on immature dendritic cells recognizes Tn antigen-carrying PTPRC/CD45 receptor on effector T cells and modulates T cell activation threshold to limit autoreactivity. (Microbial infection) Acts as a receptor for human cytomegalovirus protein UL11 and mediates binding of UL11 to T-cells, leading to reduced induction of tyrosine phosphorylation of multiple signaling proteins upon T-cell receptor stimulation and impaired T-cell proliferation. The protein is Receptor-type tyrosine-protein phosphatase C of Homo sapiens (Human).